The sequence spans 352 residues: Isopentenyl-diphosphate delta-isomerase (352 aa).

A substrate-binding site is contributed by 6 to 7 (RK). Residues 63–65 (AMT), Ser-93, and Asn-122 contribute to the FMN site. 93-95 (SQR) is a binding site for substrate. Gln-160 is a substrate binding site. Residue Glu-161 participates in Mg(2+) binding. Residues Lys-192, Thr-221, 271–273 (GIR), and 292–293 (SQ) contribute to the FMN site.

Belongs to the IPP isomerase type 2 family. As to quaternary structure, homooctamer. Dimer of tetramers. Requires FMN as cofactor. The cofactor is NADPH. Mg(2+) is required as a cofactor.

It is found in the cytoplasm. It catalyses the reaction isopentenyl diphosphate = dimethylallyl diphosphate. Involved in the biosynthesis of isoprenoids. Catalyzes the 1,3-allylic rearrangement of the homoallylic substrate isopentenyl (IPP) to its allylic isomer, dimethylallyl diphosphate (DMAPP). The polypeptide is Isopentenyl-diphosphate delta-isomerase (Pyrobaculum aerophilum (strain ATCC 51768 / DSM 7523 / JCM 9630 / CIP 104966 / NBRC 100827 / IM2)).